A 277-amino-acid chain; its full sequence is Small ribosomal subunit protein mS23 (277 aa).

2 disordered regions span residues 48–85 (APSH…KKPS) and 232–277 (LAAF…GPPI). Over residues 244-269 (ESGESEDEIPLIEEEDAIGASEESET) the composition is skewed to acidic residues.

It belongs to the mitochondrion-specific ribosomal protein mS23 family. In terms of assembly, component of the mitochondrial small ribosomal subunit.

It is found in the mitochondrion. The sequence is that of Small ribosomal subunit protein mS23 (RSM25) from Ajellomyces capsulatus (strain NAm1 / WU24) (Darling's disease fungus).